The chain runs to 292 residues: Elongation factor Ts (292 aa).

Residues 80–83 form an involved in Mg(2+) ion dislocation from EF-Tu region; that stretch reads TDFV.

This sequence belongs to the EF-Ts family.

It localises to the cytoplasm. Its function is as follows. Associates with the EF-Tu.GDP complex and induces the exchange of GDP to GTP. It remains bound to the aminoacyl-tRNA.EF-Tu.GTP complex up to the GTP hydrolysis stage on the ribosome. This is Elongation factor Ts from Mycoplasmopsis synoviae (strain 53) (Mycoplasma synoviae).